The sequence spans 385 residues: MNNLILVKYASEIFLKGLNKNKFERKLKENIRKKLKDIDHEFITDQNRWFIKSEDLDGVIERVKKVFGVKELCLVTQVTGDFDSIKEEGLKKIKESKAKSFKVETNRANKKFPMNSMEVSRAVGGYILSELGDEIEVDIHNPECKLYVEIRGNAYVFTDKDKIKAVGGLPYGMNGSTMVMLSGGIDSPVAAYLMARRGVETHCVYYHSHPYTSERAKDKVKELAKIVGRYTEKITLYVVPFTEIQMDIIEKCREDELTIIMRRFMMRVACELSEKKKIQSITTGESIGQVASQTMEGLIVSNDASDRPVFRPLIAMDKEDIMDIARDIDTYETSILPYEDCCTIFVPKHPKTKPRVKDMIIAERKLDIEALVNKAIDEMETFIFE.

The 104-residue stretch at 57 to 160 (DGVIERVKKV…RGNAYVFTDK (104 aa)) folds into the THUMP domain. Residues 180-181 (ML), 205-206 (YY), Arg-262, Gly-284, and Gln-293 contribute to the ATP site.

It belongs to the ThiI family.

The protein localises to the cytoplasm. The enzyme catalyses [ThiI sulfur-carrier protein]-S-sulfanyl-L-cysteine + a uridine in tRNA + 2 reduced [2Fe-2S]-[ferredoxin] + ATP + H(+) = [ThiI sulfur-carrier protein]-L-cysteine + a 4-thiouridine in tRNA + 2 oxidized [2Fe-2S]-[ferredoxin] + AMP + diphosphate. It catalyses the reaction [ThiS sulfur-carrier protein]-C-terminal Gly-Gly-AMP + S-sulfanyl-L-cysteinyl-[cysteine desulfurase] + AH2 = [ThiS sulfur-carrier protein]-C-terminal-Gly-aminoethanethioate + L-cysteinyl-[cysteine desulfurase] + A + AMP + 2 H(+). The protein operates within cofactor biosynthesis; thiamine diphosphate biosynthesis. Functionally, catalyzes the ATP-dependent transfer of a sulfur to tRNA to produce 4-thiouridine in position 8 of tRNAs, which functions as a near-UV photosensor. Also catalyzes the transfer of sulfur to the sulfur carrier protein ThiS, forming ThiS-thiocarboxylate. This is a step in the synthesis of thiazole, in the thiamine biosynthesis pathway. The sulfur is donated as persulfide by IscS. This Clostridium perfringens (strain 13 / Type A) protein is Probable tRNA sulfurtransferase.